Reading from the N-terminus, the 246-residue chain is 1-(5-phosphoribosyl)-5-[(5-phosphoribosylamino)methylideneamino] imidazole-4-carboxamide isomerase (246 aa).

Residue Asp-8 is the Proton acceptor of the active site. Residue Asp-131 is the Proton donor of the active site.

The protein belongs to the HisA/HisF family.

It localises to the cytoplasm. The catalysed reaction is 1-(5-phospho-beta-D-ribosyl)-5-[(5-phospho-beta-D-ribosylamino)methylideneamino]imidazole-4-carboxamide = 5-[(5-phospho-1-deoxy-D-ribulos-1-ylimino)methylamino]-1-(5-phospho-beta-D-ribosyl)imidazole-4-carboxamide. Its pathway is amino-acid biosynthesis; L-histidine biosynthesis; L-histidine from 5-phospho-alpha-D-ribose 1-diphosphate: step 4/9. This is 1-(5-phosphoribosyl)-5-[(5-phosphoribosylamino)methylideneamino] imidazole-4-carboxamide isomerase from Polaromonas naphthalenivorans (strain CJ2).